Consider the following 272-residue polypeptide: L-aspartate dehydrogenase 3 (272 aa).

NAD(+) is bound by residues alanine 126 and asparagine 194. The active site involves histidine 224.

Belongs to the L-aspartate dehydrogenase family.

It carries out the reaction L-aspartate + NADP(+) + H2O = oxaloacetate + NH4(+) + NADPH + H(+). It catalyses the reaction L-aspartate + NAD(+) + H2O = oxaloacetate + NH4(+) + NADH + H(+). The protein operates within cofactor biosynthesis; NAD(+) biosynthesis; iminoaspartate from L-aspartate (dehydrogenase route): step 1/1. Functionally, specifically catalyzes the NAD or NADP-dependent dehydrogenation of L-aspartate to iminoaspartate. The polypeptide is L-aspartate dehydrogenase 3 (Bordetella bronchiseptica (strain ATCC BAA-588 / NCTC 13252 / RB50) (Alcaligenes bronchisepticus)).